Here is a 204-residue protein sequence, read N- to C-terminus: Methylthioribulose-1-phosphate dehydratase (204 aa).

Zn(2+)-binding residues include His-94 and His-96.

Belongs to the aldolase class II family. MtnB subfamily. Zn(2+) is required as a cofactor.

It carries out the reaction 5-(methylsulfanyl)-D-ribulose 1-phosphate = 5-methylsulfanyl-2,3-dioxopentyl phosphate + H2O. The protein operates within amino-acid biosynthesis; L-methionine biosynthesis via salvage pathway; L-methionine from S-methyl-5-thio-alpha-D-ribose 1-phosphate: step 2/6. Catalyzes the dehydration of methylthioribulose-1-phosphate (MTRu-1-P) into 2,3-diketo-5-methylthiopentyl-1-phosphate (DK-MTP-1-P). The chain is Methylthioribulose-1-phosphate dehydratase from Pseudomonas savastanoi pv. phaseolicola (strain 1448A / Race 6) (Pseudomonas syringae pv. phaseolicola (strain 1448A / Race 6)).